The following is a 301-amino-acid chain: Probable alpha-L-glutamate ligase (301 aa).

Residues 104–287 (LQLLSRKGIG…IAGMIIEYIE (184 aa)) form the ATP-grasp domain. ATP-binding positions include Lys141, 178–179 (EY), Asp187, and 211–213 (RSN). 3 residues coordinate Mg(2+): Asp248, Glu260, and Asn262. The Mn(2+) site is built by Asp248, Glu260, and Asn262.

This sequence belongs to the RimK family. It depends on Mg(2+) as a cofactor. Mn(2+) serves as cofactor.

The chain is Probable alpha-L-glutamate ligase from Methanococcoides burtonii (strain DSM 6242 / NBRC 107633 / OCM 468 / ACE-M).